The following is a 171-amino-acid chain: Adenine phosphoribosyltransferase (171 aa).

It belongs to the purine/pyrimidine phosphoribosyltransferase family. Homodimer.

The protein resides in the cytoplasm. It carries out the reaction AMP + diphosphate = 5-phospho-alpha-D-ribose 1-diphosphate + adenine. The protein operates within purine metabolism; AMP biosynthesis via salvage pathway; AMP from adenine: step 1/1. Functionally, catalyzes a salvage reaction resulting in the formation of AMP, that is energically less costly than de novo synthesis. This Prochlorococcus marinus subsp. pastoris (strain CCMP1986 / NIES-2087 / MED4) protein is Adenine phosphoribosyltransferase (apt).